Here is a 200-residue protein sequence, read N- to C-terminus: Dephospho-CoA kinase (200 aa).

Residues 3 to 200 (IFGLTGGIGS…LNVNNKCNMD (198 aa)) form the DPCK domain. Residue 11–16 (GSGKSL) coordinates ATP.

Belongs to the CoaE family.

Its subcellular location is the cytoplasm. The enzyme catalyses 3'-dephospho-CoA + ATP = ADP + CoA + H(+). It participates in cofactor biosynthesis; coenzyme A biosynthesis; CoA from (R)-pantothenate: step 5/5. In terms of biological role, catalyzes the phosphorylation of the 3'-hydroxyl group of dephosphocoenzyme A to form coenzyme A. The sequence is that of Dephospho-CoA kinase from Ehrlichia canis (strain Jake).